Here is a 906-residue protein sequence, read N- to C-terminus: Ectonucleotide pyrophosphatase/phosphodiesterase family member 1 (906 aa).

The segment at 1-22 is disordered; sequence MERDGDQAGHGPRHGSAGNGRE. Residues 1 to 58 are Cytoplasmic-facing; the sequence is MERDGDQAGHGPRHGSAGNGRELESPAAASLLAPMDLGEEPLEKAERARPAKDPNTYK. Position 25 is a phosphoserine (Ser25). Residues 27–34 carry the Di-leucine motif motif; sequence AAASLLAP. The chain crosses the membrane as a helical; Signal-anchor for type II membrane protein span at residues 59 to 79; sequence VLSLVLSVCVLTTILGCIFGL. Topologically, residues 80 to 906 are extracellular; the sequence is KPSCAKEVKS…THLPIFSQED (827 aa). 2 SMB domains span residues 86–126 and 127–171; these read EVKS…VEPT and HIWT…DKKS. 10 disulfides stabilise this stretch: Cys90/Cys104, Cys94/Cys122, Cys102/Cys115, Cys108/Cys114, Cys131/Cys148, Cys136/Cys166, Cys146/Cys159, Cys152/Cys158, Cys177/Cys223, and Cys185/Cys397. Asn161 carries an N-linked (GlcNAc...) asparagine glycan. A phosphodiesterase region spans residues 173 to 573; sequence VEETCESIDT…APNNGSHGSL (401 aa). AMP-binding residues include Asp200, Thr238, and Asn259. Residues Asp200 and Thr238 each coordinate Zn(2+). Residue Thr238 is the AMP-threonine intermediate of the active site. 2 residues coordinate CMP: Thr238 and Asn259. Thr238 and Asn259 together coordinate dTMP. Residues Thr238 and Asn259 each coordinate GMP. Thr238 bears the Phosphothreonine mark. An N-linked (GlcNAc...) asparagine glycan is attached at Asn267. Leu272, Lys277, and Tyr322 together coordinate GMP. Residues Lys277 and Tyr322 each coordinate AMP. Lys277 and Tyr322 together coordinate CMP. Tyr322 provides a ligand contact to dTMP. The N-linked (GlcNAc...) asparagine glycan is linked to Asn323. Asp358 contacts AMP. The Zn(2+) site is built by Asp358, His362, Asp405, and His406. Residue Asp358 participates in CMP binding. Position 358 (Asp358) interacts with dTMP. Residue Asp358 participates in GMP binding. Residue His362 coordinates 2',3'-cGAMP. Residue His406 participates in AMP binding. His406 contacts CMP. Position 406 (His406) interacts with dTMP. His406 serves as a coordination point for GMP. Cystine bridges form between Cys413–Cys512, Cys462–Cys849, Cys596–Cys653, Cys607–Cys707, Cys609–Cys692, and Cys819–Cys829. N-linked (GlcNAc...) asparagine glycosylation is present at Asn459. Ser514 contributes to the 2',3'-cGAMP binding site. His517 is an AMP binding site. Residue His517 participates in Zn(2+) binding. His517 provides a ligand contact to CMP. His517 provides a ligand contact to dTMP. His517 serves as a coordination point for GMP. 2 N-linked (GlcNAc...) asparagine glycosylation sites follow: Asn567 and Asn624. A linker region spans residues 579–628; sequence KPIYNPSHPKEEGFLSQCPIKSTSNDLGCTCDPWIVPIKDFEKQLNLTTE. Positions 635–906 are nuclease-like domain; sequence HMTVPYGRPR…THLPIFSQED (272 aa). Ca(2+) contacts are provided by Asp781, Asp783, Asp785, Arg787, and Asp789.

Belongs to the nucleotide pyrophosphatase/phosphodiesterase family. In terms of assembly, ectonucleotide pyrophosphatase/phosphodiesterase family member 1: Homodimer. Ectonucleotide pyrophosphatase/phosphodiesterase family member 1: Interacts with INSR; leading to inhibit INSR autophosphorylation and subsequent activation of INSR kinase activity. Ectonucleotide pyrophosphatase/phosphodiesterase family member 1, secreted form: Monomeric. Zn(2+) serves as cofactor. Post-translationally, N-glycosylated. In terms of processing, the secreted form is produced through cleavage at Lys-85 by intracellular processing. Selectively expressed on the surface of antibody-secreting cells. Expressed in osteocytes and osteoclasts.

The protein localises to the cell membrane. Its subcellular location is the basolateral cell membrane. It is found in the secreted. The catalysed reaction is Hydrolytically removes 5'-nucleotides successively from the 3'-hydroxy termini of 3'-hydroxy-terminated oligonucleotides.. It carries out the reaction a ribonucleoside 5'-triphosphate + H2O = a ribonucleoside 5'-phosphate + diphosphate + H(+). It catalyses the reaction ATP + H2O = AMP + diphosphate + H(+). The enzyme catalyses UTP + H2O = UMP + diphosphate + H(+). The catalysed reaction is GTP + H2O = GMP + diphosphate + H(+). It carries out the reaction CTP + H2O = CMP + diphosphate + H(+). It catalyses the reaction 2',3'-cGAMP + 2 H2O = GMP + AMP + 2 H(+). The enzyme catalyses P(1),P(4)-bis(5'-adenosyl) tetraphosphate + H2O = AMP + ATP + 2 H(+). The catalysed reaction is 3',5'-cyclic AMP + H2O = AMP + H(+). With respect to regulation, at low concentrations of ATP, a phosphorylated intermediate is formed which inhibits further hydrolysis. In terms of biological role, nucleotide pyrophosphatase that generates diphosphate (PPi) and functions in bone mineralization and soft tissue calcification by regulating pyrophosphate levels. PPi inhibits bone mineralization and soft tissue calcification by binding to nascent hydroxyapatite crystals, thereby preventing further growth of these crystals. Preferentially hydrolyzes ATP, but can also hydrolyze other nucleoside 5' triphosphates such as GTP, CTP and UTP to their corresponding monophosphates with release of pyrophosphate, as well as diadenosine polyphosphates, and also 3',5'-cAMP to AMP. May also be involved in the regulation of the availability of nucleotide sugars in the endoplasmic reticulum and Golgi, and the regulation of purinergic signaling. Inhibits ectopic joint calcification and maintains articular chondrocytes by repressing hedgehog signaling; it is however unclear whether hedgehog inhibition is direct or indirect. Appears to modulate insulin sensitivity. Also involved in melanogenesis. Also able to hydrolyze 2',3'-cGAMP (cyclic GMP-AMP), a second messenger that activates TMEM173/STING and triggers type-I interferon production. 2',3'-cGAMP degradation takes place in the lumen or extracellular space, and not in the cytosol where it is produced; the role of 2',3'-cGAMP hydrolysis is therefore unclear. Not able to hydrolyze the 2',3'-cGAMP linkage isomer 3',3'-cGAMP. The protein is Ectonucleotide pyrophosphatase/phosphodiesterase family member 1 of Mus musculus (Mouse).